A 67-amino-acid chain; its full sequence is UPF0337 protein CC_0938 (67 aa).

Residues 37-67 form a disordered region; it reads AAQKAKGDLQNKVGKAQDKARRRDQALNARL. The span at 41–61 shows a compositional bias: basic and acidic residues; sequence AKGDLQNKVGKAQDKARRRDQ.

The protein belongs to the UPF0337 (CsbD) family.

The chain is UPF0337 protein CC_0938 from Caulobacter vibrioides (strain ATCC 19089 / CIP 103742 / CB 15) (Caulobacter crescentus).